We begin with the raw amino-acid sequence, 463 residues long: MNRITRKSCLFAIIFASLFVTHALGAAIDPPRRPHNVKPFHNGNLELQRRANEPFFEIDVKSLNTNSPISELCKKDLHVIESSHDLFHLQNQCEFILGSLKVTNYDSNILDLNSLRAIGGDLIIQDSPELIRIQAGNLNKIEGLFQLQGLTSLVSVEIPTLKFCQSLEWKVVPILNYVSMDSQNIEIIKDIVISDTSLANIENFNKVQEIDTFNINNNRFLETIHSNVKTIRGQFSVHANAKELELEMPHLREVENITIRDTSLVYLPQLTKVKSSLEFIENYFYELNLNNLQKIGGTLGIINNVNLIKVNLENLTDIQGGLMIADNESLEDITFLPNLKQIGGAIFFEGSFKDIMFDSLKLVKGSAFIKSSSNVLDCNKWTNPSNGRSIIRGGKFTCISGKKENTLNVKQDGTIIEKGYKDLTQEGEDSKKRVISKYANSANPSMQLDPLLFGTCLVAMLLF.

The N-terminal stretch at 1–25 (MNRITRKSCLFAIIFASLFVTHALG) is a signal peptide. LRR repeat units lie at residues 127-147 (SPEL…LFQL), 185-206 (IEII…NFNK), 207-233 (VQEI…TIRG), 251-275 (LREV…KVKS), and 302-325 (INNV…LMIA). N-linked (GlcNAc...) asparagine glycans are attached at residues N256, N314, and N327. N440 carries the GPI-anchor amidated asparagine lipid modification. The propeptide at 441 to 463 (SANPSMQLDPLLFGTCLVAMLLF) is removed in mature form.

It belongs to the SPS2 family.

It localises to the cell membrane. Redundant with SPS2 for the organization of the beta-glucan layer of the spore wall. The chain is Sporulation-specific protein 22 (SPS22) from Saccharomyces cerevisiae (strain ATCC 204508 / S288c) (Baker's yeast).